The sequence spans 79 residues: MDIKSEVLAIIDDLFMEDVSSMMDEDLFDAGVLDSMGTVELIVELESHFNIDIPIAEFGRNDWNTANKIVAGVTELCNA.

The 77-residue stretch at 1-77 (MDIKSEVLAI…KIVAGVTELC (77 aa)) folds into the Carrier domain. Position 35 is an O-(pantetheine 4'-phosphoryl)serine (S35).

The protein belongs to the DltC family. In terms of processing, 4'-phosphopantetheine is transferred from CoA to a specific serine of apo-DCP.

It localises to the cytoplasm. It participates in cell wall biogenesis; lipoteichoic acid biosynthesis. In terms of biological role, carrier protein involved in the D-alanylation of lipoteichoic acid (LTA). The loading of thioester-linked D-alanine onto DltC is catalyzed by D-alanine--D-alanyl carrier protein ligase DltA. The DltC-carried D-alanyl group is further transferred to cell membrane phosphatidylglycerol (PG) by forming an ester bond, probably catalyzed by DltD. D-alanylation of LTA plays an important role in modulating the properties of the cell wall in Gram-positive bacteria, influencing the net charge of the cell wall. The chain is D-alanyl carrier protein from Streptococcus agalactiae serotype Ia (strain ATCC 27591 / A909 / CDC SS700).